Here is a 348-residue protein sequence, read N- to C-terminus: Small ribosomal subunit biogenesis GTPase RsgA (348 aa).

A disordered region spans residues 1–32 (MAKQKLTQNQKRRIHSNNAKALDRHRRQTKKQ). A CP-type G domain is found at 106 to 274 (KNELSRPDYY…LIDSPGIREF (169 aa)). GTP is bound by residues 162–165 (NKID) and 216–224 (GQSGVGKSS). 4 residues coordinate Zn(2+): C298, C303, H305, and C311.

The protein belongs to the TRAFAC class YlqF/YawG GTPase family. RsgA subfamily. In terms of assembly, monomer. Associates with 30S ribosomal subunit, binds 16S rRNA. The cofactor is Zn(2+).

It is found in the cytoplasm. Its function is as follows. One of several proteins that assist in the late maturation steps of the functional core of the 30S ribosomal subunit. Helps release RbfA from mature subunits. May play a role in the assembly of ribosomal proteins into the subunit. Circularly permuted GTPase that catalyzes slow GTP hydrolysis, GTPase activity is stimulated by the 30S ribosomal subunit. The sequence is that of Small ribosomal subunit biogenesis GTPase RsgA from Actinobacillus succinogenes (strain ATCC 55618 / DSM 22257 / CCUG 43843 / 130Z).